Consider the following 1359-residue polypeptide: DNA-directed RNA polymerase subunit beta (1359 aa).

This sequence belongs to the RNA polymerase beta chain family. As to quaternary structure, the RNAP catalytic core consists of 2 alpha, 1 beta, 1 beta' and 1 omega subunit. When a sigma factor is associated with the core the holoenzyme is formed, which can initiate transcription.

The catalysed reaction is RNA(n) + a ribonucleoside 5'-triphosphate = RNA(n+1) + diphosphate. DNA-dependent RNA polymerase catalyzes the transcription of DNA into RNA using the four ribonucleoside triphosphates as substrates. The chain is DNA-directed RNA polymerase subunit beta from Nitrosomonas eutropha (strain DSM 101675 / C91 / Nm57).